The following is an 800-amino-acid chain: Phenylalanine--tRNA ligase beta subunit (800 aa).

In terms of domain architecture, tRNA-binding spans 39–154; the sequence is TKDIKNLVVG…ESQVPGTDAL (116 aa). The B5 domain maps to 408-483; that stretch reads AFITPIDITA…RIYGYDDIPS (76 aa). Asp461, Asp467, Glu470, and Glu471 together coordinate Mg(2+). Residues 708 to 800 enclose the FDX-ACB domain; sequence PRFPGMSRDI…ALIEQGAVIR (93 aa).

This sequence belongs to the phenylalanyl-tRNA synthetase beta subunit family. Type 1 subfamily. In terms of assembly, tetramer of two alpha and two beta subunits. It depends on Mg(2+) as a cofactor.

It localises to the cytoplasm. It catalyses the reaction tRNA(Phe) + L-phenylalanine + ATP = L-phenylalanyl-tRNA(Phe) + AMP + diphosphate + H(+). The protein is Phenylalanine--tRNA ligase beta subunit of Staphylococcus aureus (strain Mu50 / ATCC 700699).